A 620-amino-acid polypeptide reads, in one-letter code: Schwann cell myelin protein (620 aa).

An N-terminal signal peptide occupies residues 1–17 (MELLVLTVLLMGTGCIS). The Extracellular segment spans residues 18 to 516 (APWAAWMPPK…GGLVWAKVGP (499 aa)). Residues 28 to 106 (MAALSGTCVQ…RDCTLNIARL (79 aa)) enclose the Ig-like V-type domain. 3 cysteine pairs are disulfide-bonded: cysteine 35-cysteine 164, cysteine 40-cysteine 99, and cysteine 158-cysteine 216. Arginine 117 contacts N-acetylneuraminate. 4 consecutive Ig-like C2-type domains span residues 151 to 233 (GSEA…DVGL), 239 to 322 (PQVV…LRVA), 325 to 407 (PRAP…FNIS), and 414 to 495 (VLPA…NRHG). N-linked (GlcNAc...) asparagine glycosylation occurs at asparagine 222. A disulfide bond links cysteine 260 and cysteine 304. 2 N-linked (GlcNAc...) asparagine glycosylation sites follow: asparagine 314 and asparagine 331. Cysteine 346 and cysteine 391 are disulfide-bonded. N-linked (GlcNAc...) asparagine glycosylation is present at asparagine 405. Cystine bridges form between cysteine 420-cysteine 429 and cysteine 431-cysteine 488. Residue asparagine 449 is glycosylated (N-linked (GlcNAc...) asparagine). A helical membrane pass occupies residues 517-536 (VGAVVAFAIVIAVVCYLSQS). Residues 537-620 (RRKKGAGSPE…PPEYAEIRVK (84 aa)) lie on the Cytoplasmic side of the membrane. Disordered stretches follow at residues 539–562 (KKGAGSPEVTPVQPMAGPGGDPDL) and 583–620 (VKEGSGAPQEVTPTSHPPMKPTRGPLEDPPEYAEIRVK).

The protein belongs to the immunoglobulin superfamily. SIGLEC (sialic acid binding Ig-like lectin) family. In terms of tissue distribution, exclusively expressed by myelinating and nonmyelinating Schwann cells and oligodendrocytes.

The protein localises to the membrane. This chain is Schwann cell myelin protein (SMP), found in Coturnix japonica (Japanese quail).